The sequence spans 146 residues: MKLRVVWIGKTKESAIQTLTGEYLKRLSRYVATEGLEIGSEEALLKLKDRPGRTAPVLVLMDERGKQVGSEELANFLGYHRDQGVQDLIFAIGPSDGWQKETLKSATQVLSMGKMTLPHELARVVLLEQLYRGYTILTGHPYHGGH.

Residues leucine 60, glycine 93, and 112 to 117 (MGKMTL) contribute to the S-adenosyl-L-methionine site.

The protein belongs to the RNA methyltransferase RlmH family. In terms of assembly, homodimer.

It is found in the cytoplasm. It catalyses the reaction pseudouridine(1915) in 23S rRNA + S-adenosyl-L-methionine = N(3)-methylpseudouridine(1915) in 23S rRNA + S-adenosyl-L-homocysteine + H(+). Functionally, specifically methylates the pseudouridine at position 1915 (m3Psi1915) in 23S rRNA. This chain is Ribosomal RNA large subunit methyltransferase H, found in Koribacter versatilis (strain Ellin345).